Consider the following 212-residue polypeptide: MNYPHPIIAREGWPFIAIAAVVALLVHFIAGFGFSWLFWLLLIFVVQFFRDPARPIPTQANAVLCPADGRIVAVETAHDPYANREALKISVFMNVFNVHSQRSPVDGAISKVEYFPGAYLNAAVDKASTENERNAVVIEMAGGQTVTSVQIAGLIARRILCYVRAGEPLTRGQRYGFIRFGSRVDVYLPVGSRPRVSIGEKVSASSTILAEL.

Residue serine 182 is the Schiff-base intermediate with substrate; via pyruvic acid of the active site. Pyruvic acid (Ser); by autocatalysis is present on serine 182.

The protein belongs to the phosphatidylserine decarboxylase family. PSD-A subfamily. As to quaternary structure, heterodimer of a large membrane-associated beta subunit and a small pyruvoyl-containing alpha subunit. It depends on pyruvate as a cofactor. Post-translationally, is synthesized initially as an inactive proenzyme. Formation of the active enzyme involves a self-maturation process in which the active site pyruvoyl group is generated from an internal serine residue via an autocatalytic post-translational modification. Two non-identical subunits are generated from the proenzyme in this reaction, and the pyruvate is formed at the N-terminus of the alpha chain, which is derived from the carboxyl end of the proenzyme. The post-translation cleavage follows an unusual pathway, termed non-hydrolytic serinolysis, in which the side chain hydroxyl group of the serine supplies its oxygen atom to form the C-terminus of the beta chain, while the remainder of the serine residue undergoes an oxidative deamination to produce ammonia and the pyruvoyl prosthetic group on the alpha chain.

Its subcellular location is the cell membrane. It catalyses the reaction a 1,2-diacyl-sn-glycero-3-phospho-L-serine + H(+) = a 1,2-diacyl-sn-glycero-3-phosphoethanolamine + CO2. Its pathway is phospholipid metabolism; phosphatidylethanolamine biosynthesis; phosphatidylethanolamine from CDP-diacylglycerol: step 2/2. Catalyzes the formation of phosphatidylethanolamine (PtdEtn) from phosphatidylserine (PtdSer). The polypeptide is Phosphatidylserine decarboxylase proenzyme (Paraburkholderia phytofirmans (strain DSM 17436 / LMG 22146 / PsJN) (Burkholderia phytofirmans)).